The sequence spans 377 residues: Naringenin,2-oxoglutarate 3-dioxygenase (377 aa).

The region spanning 193-297 (CVDMDQKVVV…RLSIATFQNP (105 aa)) is the Fe2OG dioxygenase domain. Residues His-220, Asp-222, and His-278 each coordinate Fe cation. Arg-288 is a 2-oxoglutarate binding site.

It belongs to the iron/ascorbate-dependent oxidoreductase family. Fe(2+) serves as cofactor. The cofactor is L-ascorbate.

The catalysed reaction is a (2S)-flavan-4-one + 2-oxoglutarate + O2 = a (2R,3R)-dihydroflavonol + succinate + CO2. It participates in secondary metabolite biosynthesis; flavonoid biosynthesis. In terms of biological role, catalyzes the 3-beta-hydroxylation of 2S-flavanones to 2R,3R-dihydroflavonols which are intermediates in the biosynthesis of flavonols, anthocyanidins, catechins and proanthocyanidins in plants. The polypeptide is Naringenin,2-oxoglutarate 3-dioxygenase (Hordeum vulgare (Barley)).